A 92-amino-acid chain; its full sequence is Small ribosomal subunit protein uS19 (92 aa).

The protein belongs to the universal ribosomal protein uS19 family.

Its function is as follows. Protein S19 forms a complex with S13 that binds strongly to the 16S ribosomal RNA. This chain is Small ribosomal subunit protein uS19, found in Nostoc sp. (strain PCC 7120 / SAG 25.82 / UTEX 2576).